The sequence spans 178 residues: Large ribosomal subunit protein uL6 (178 aa).

This sequence belongs to the universal ribosomal protein uL6 family. Part of the 50S ribosomal subunit.

Functionally, this protein binds to the 23S rRNA, and is important in its secondary structure. It is located near the subunit interface in the base of the L7/L12 stalk, and near the tRNA binding site of the peptidyltransferase center. The chain is Large ribosomal subunit protein uL6 from Streptococcus pyogenes serotype M3 (strain ATCC BAA-595 / MGAS315).